A 294-amino-acid chain; its full sequence is Bifunctional protein FolD (294 aa).

NADP(+) is bound by residues 176–178 (GAS), Ser-201, and Ile-242.

It belongs to the tetrahydrofolate dehydrogenase/cyclohydrolase family. Homodimer.

It carries out the reaction (6R)-5,10-methylene-5,6,7,8-tetrahydrofolate + NADP(+) = (6R)-5,10-methenyltetrahydrofolate + NADPH. The enzyme catalyses (6R)-5,10-methenyltetrahydrofolate + H2O = (6R)-10-formyltetrahydrofolate + H(+). Its pathway is one-carbon metabolism; tetrahydrofolate interconversion. In terms of biological role, catalyzes the oxidation of 5,10-methylenetetrahydrofolate to 5,10-methenyltetrahydrofolate and then the hydrolysis of 5,10-methenyltetrahydrofolate to 10-formyltetrahydrofolate. The sequence is that of Bifunctional protein FolD from Bordetella petrii (strain ATCC BAA-461 / DSM 12804 / CCUG 43448).